Reading from the N-terminus, the 360-residue chain is MRVDLFDFDLPDERIALRPAEPRDSARLLVVDPNAEMVLSDRQIRDLSSYLRPGDAIVFNDTKVIPAQLEGIRHREGAPGQQVSATLHMRAAPDRWKAFAKPGKRIKIGDRIQFGHGENVCALGALDAVVEEKGEGGEITLRFDLSGPALDEAIAAVGHIPLPPYIAAKRPEDERDRADYQTIYAREEGAVAAPTAGLHFTPSLFATLDAMGVERHFVTLHVGAGTFLPVKADDTEDHKMHFEIGHVDAATAEKLNAVKARGGRIVCVGTTSLRLLESAAAEDGTIKPWSGATGIFITPGYRFKTVDLLMTNFHLPRSTLFMLVSAFAGLDTMRAAYTHAIETGYRFYSYGDGSLLHRKD.

The protein belongs to the QueA family. Monomer.

It localises to the cytoplasm. It carries out the reaction 7-aminomethyl-7-carbaguanosine(34) in tRNA + S-adenosyl-L-methionine = epoxyqueuosine(34) in tRNA + adenine + L-methionine + 2 H(+). It participates in tRNA modification; tRNA-queuosine biosynthesis. In terms of biological role, transfers and isomerizes the ribose moiety from AdoMet to the 7-aminomethyl group of 7-deazaguanine (preQ1-tRNA) to give epoxyqueuosine (oQ-tRNA). This is S-adenosylmethionine:tRNA ribosyltransferase-isomerase from Rhizobium rhizogenes (strain K84 / ATCC BAA-868) (Agrobacterium radiobacter).